Here is a 148-residue protein sequence, read N- to C-terminus: MCPPVRQRPAQAPPAKRQALETVPHPQNRGRLMSPKARPPKMQRRPRPPVAKRRRFPRSPQQVERPILPPVESTPQDMEPGQVQSPPQITAVIQLRQERDTMRPPIYLPALLANCGPAGLLRAHRLPQPKPPCLSRQRPSPDSQTSPC.

Low complexity predominate over residues 1 to 17; sequence MCPPVRQRPAQAPPAKR. 2 disordered regions span residues 1–86 and 122–148; these read MCPP…VQSP and RAHRLPQPKPPCLSRQRPSPDSQTSPC. The span at 38-57 shows a compositional bias: basic residues; that stretch reads RPPKMQRRPRPPVAKRRRFP. Over residues 137–148 the composition is skewed to polar residues; the sequence is QRPSPDSQTSPC.

The protein belongs to the Epstein-Barr virus BLLF2 family.

This is an uncharacterized protein from Epstein-Barr virus (strain AG876) (HHV-4).